Consider the following 1457-residue polypeptide: ABC transporter G family member 36 (1457 aa).

The disordered stretch occupies residues 14-43 (RLGGSMRGDSGSMWRRGDDVFSRSSREEDD). A compositionally biased stretch (basic and acidic residues) spans 28–39 (RRGDDVFSRSSR). The ABC transporter 1 domain maps to 164 to 437 (GNALGILPNR…FESMGFKCPD (274 aa)). Residue 197–204 (GPPGSGKT) coordinates ATP. Residues 515–728 (ELLKANIDRE…AQNAISVNEL (214 aa)) enclose the ABC transmembrane type-2 1 domain. The next 7 membrane-spanning stretches (helical) occupy residues 533–553 (FVYM…MTLF), 565–585 (SGGI…FNGF), 621–641 (IPIT…VIGF), 653–673 (LLML…GGAA), 677–697 (IVAN…GGFI), 706–726 (WWIW…ISVN), and 765–785 (IGFG…TLAL). A disordered region spans residues 821–841 (SSGSTRRPMGNGTENDSTIVD). The 253-residue stretch at 860–1112 (LSFDNVRYSV…ELIKYFESIP (253 aa)) folds into the ABC transporter 2 domain. Residue 905–912 (GVSGAGKT) participates in ATP binding. The 215-residue stretch at 1185-1399 (TQCMACLWKQ…TLYGLVVSQF (215 aa)) folds into the ABC transmembrane type-2 2 domain. A run of 7 helical transmembrane segments spans residues 1209 to 1229 (FFFT…LGGK), 1244 to 1264 (YAAV…VVAV), 1292 to 1312 (IPYT…MIGF), 1319 to 1339 (FFWY…YGMM), 1349 to 1369 (IASI…GFVI), 1380 to 1400 (WYCW…SQFG), and 1429 to 1449 (WVAT…GFAI).

It belongs to the ABC transporter superfamily. ABCG family. PDR (TC 3.A.1.205) subfamily.

It is found in the membrane. May be a general defense protein. The polypeptide is ABC transporter G family member 36 (Oryza sativa subsp. japonica (Rice)).